The chain runs to 136 residues: Histone H3.1 (136 aa).

The disordered stretch occupies residues 1–41 (MARTKQTARKSTGGKAPRKQLATKAARKSAPAAGGVKKPHR). K5 carries the N6,N6,N6-trimethyllysine; alternate modification. K5 carries the post-translational modification N6,N6-dimethyllysine; alternate. N6-methyllysine; alternate occurs at positions 5 and 10. K10 is modified (N6-acetyllysine; alternate). Residue S11 is modified to Phosphoserine. Position 15 is an N6,N6-dimethyllysine; alternate (K15). An N6-acetyllysine; alternate mark is found at K15, K19, K24, K28, and K37. Residues K19, K24, K28, and K37 each carry the N6-methyllysine; alternate modification. Residues 22–33 (ATKAARKSAPAA) are compositionally biased toward low complexity. Residues K28 and K37 each carry the N6,N6,N6-trimethyllysine; alternate modification. N6,N6-dimethyllysine; alternate is present on residues K28 and K37. Residues K57 and K65 each carry the N6-acetyllysine modification. Position 80 is an N6,N6,N6-trimethyllysine; alternate (K80). Residue K80 is modified to N6,N6-dimethyllysine; alternate. K80 is modified (N6-methyllysine; alternate).

Belongs to the histone H3 family. The nucleosome is a histone octamer containing two molecules each of H2A, H2B, H3 and H4 assembled in one H3-H4 heterotetramer and two H2A-H2B heterodimers. The octamer wraps approximately 147 bp of DNA. Post-translationally, phosphorylated to form H3S10ph. H3S10ph promotes subsequent H3K14ac formation and is required for transcriptional activation through TBP recruitment to the promoters. Mono-, di- and trimethylated by the COMPASS complex to form H3K4me1/2/3. H3K4me activates gene expression by regulating transcription elongation and plays a role in telomere length maintenance. H3K4me enrichment correlates with transcription levels, and occurs in a 5' to 3' gradient with H3K4me3 enrichment at the 5'-end of genes, shifting to H3K4me2 and then H3K4me1. Methylated by SET2 to form H3K36me. H3K36me represses gene expression. Methylated by DOT1 to form H3K79me. H3K79me is required for association of SIR proteins with telomeric regions and for telomeric silencing. The COMPASS-mediated formation of H3K4me2/3 and the DOT1-mediated formation of H3K79me require H2BK123ub1. In terms of processing, acetylation of histone H3 leads to transcriptional activation. H3K14ac formation by GCN5 is promoted by H3S10ph. H3K14ac can also be formed by ESA1. H3K56ac formation occurs predominantly in newly synthesized H3 molecules during G1, S and G2/M of the cell cycle and may be involved in DNA repair.

It localises to the nucleus. The protein localises to the chromosome. Core component of nucleosome. Nucleosomes wrap and compact DNA into chromatin, limiting DNA accessibility to the cellular machineries which require DNA as a template. Histones thereby play a central role in transcription regulation, DNA repair, DNA replication and chromosomal stability. DNA accessibility is regulated via a complex set of post-translational modifications of histones, also called histone code, and nucleosome remodeling. The sequence is that of Histone H3.1 (HHT1) from Mycosarcoma maydis (Corn smut fungus).